Reading from the N-terminus, the 180-residue chain is Lysine-specific demethylase 5C (180 aa).

Residues 116–159 form a disordered region; sequence PEESLAYSSDAGEGAGHIPKVQGLLENGDSVTSPEKVATEEGSG. Ser-148 is subject to Phosphoserine.

It belongs to the JARID1 histone demethylase family. As to quaternary structure, part of two distinct complexes, one containing E2F6, and the other containing REST. Interacts with ZMYND8. Requires Fe(2+) as cofactor.

It is found in the nucleus. It catalyses the reaction N(6),N(6),N(6)-trimethyl-L-lysyl(4)-[histone H3] + 3 2-oxoglutarate + 3 O2 = L-lysyl(4)-[histone H3] + 3 formaldehyde + 3 succinate + 3 CO2. Histone demethylase that specifically demethylates 'Lys-4' of histone H3, thereby playing a central role in histone code. Does not demethylate histone H3 'Lys-9', H3 'Lys-27', H3 'Lys-36', H3 'Lys-79' or H4 'Lys-20'. Demethylates trimethylated and dimethylated but not monomethylated H3 'Lys-4'. Participates in transcriptional repression of neuronal genes by recruiting histone deacetylases and REST at neuron-restrictive silencer elements. Represses the CLOCK-BMAL1 heterodimer-mediated transcriptional activation of the core clock component PER2. This chain is Lysine-specific demethylase 5C (KDM5C), found in Cricetulus griseus (Chinese hamster).